Consider the following 685-residue polypeptide: Methionine--tRNA ligase (685 aa).

Positions 15–25 (PYANGPIHLGH) match the 'HIGH' region motif. Zn(2+) is bound by residues Cys146, Cys149, Cys159, and Cys162. A 'KMSKS' region motif is present at residues 331-335 (KMSKS). Lys334 contributes to the ATP binding site. The tRNA-binding domain maps to 583 to 685 (DFAKMDLRVA…AGVKAGSRVK (103 aa)).

The protein belongs to the class-I aminoacyl-tRNA synthetase family. MetG type 1 subfamily. In terms of assembly, homodimer. Zn(2+) is required as a cofactor.

It localises to the cytoplasm. It carries out the reaction tRNA(Met) + L-methionine + ATP = L-methionyl-tRNA(Met) + AMP + diphosphate. Functionally, is required not only for elongation of protein synthesis but also for the initiation of all mRNA translation through initiator tRNA(fMet) aminoacylation. This is Methionine--tRNA ligase from Actinobacillus succinogenes (strain ATCC 55618 / DSM 22257 / CCUG 43843 / 130Z).